The sequence spans 43 residues: Seed non-specific lipid transfer protein-like (43 aa).

It belongs to the plant LTP family. In terms of assembly, homodimer.

In terms of biological role, plant non-specific lipid-transfer proteins transfer phospholipids as well as galactolipids across membranes. May play a role in wax or cutin deposition in the cell walls of expanding epidermal cells and certain secretory tissues. This isoform inhibits the hyphal growth of several fungi in vitro. This is Seed non-specific lipid transfer protein-like from Raphanus sativus (Radish).